The chain runs to 361 residues: Caffeic acid 3-O-methyltransferase 1 (361 aa).

Position 128–134 (128–134) interacts with substrate; sequence MNQDKVL. Residues 160 to 178 form a substrate binding region; sequence AFEYHGTDPRFNKVFNQGM. S-adenosyl-L-methionine-binding residues include G206, D229, D249, M250, and K263. Catalysis depends on H267, which acts as the Proton acceptor.

This sequence belongs to the class I-like SAM-binding methyltransferase superfamily. Cation-independent O-methyltransferase family. COMT subfamily. Homodimer.

The catalysed reaction is (E)-caffeate + S-adenosyl-L-methionine = (E)-ferulate + S-adenosyl-L-homocysteine + H(+). It participates in aromatic compound metabolism; phenylpropanoid biosynthesis. Its function is as follows. Catalyzes the conversion of caffeic acid to ferulic acid and of 5-hydroxyferulic acid to sinapic acid. The resulting products may subsequently be converted to the corresponding alcohols that are incorporated into lignins. The protein is Caffeic acid 3-O-methyltransferase 1 (COMT1) of Ocimum basilicum (Sweet basil).